Here is a 190-residue protein sequence, read N- to C-terminus: Proline-rich protein 3 (190 aa).

Disordered regions lie at residues Met-1–Pro-94, Pro-110–Arg-130, and Lys-142–Pro-161. Over residues Met-37–Met-48 the composition is skewed to pro residues. The segment at Lys-157–Val-185 adopts a C3H1-type zinc-finger fold.

In Mus musculus (Mouse), this protein is Proline-rich protein 3 (Prr3).